Here is a 505-residue protein sequence, read N- to C-terminus: MHQWRKHQQSSVHFVPTMGALHRGHGQLIKSVHGFGRLQPAAVLVSVFVNPLQFGPAEDFDSYPRDLEADCELASRSGASALWAPSVDQVFPGGASSHFRIQVPSHLQAHLCGASRPGHFDGVVTVVARLLALVRPEVLVLGEKDWQQLVILRHLVAQLGLPVRVHGIATVRDDDGLACSSRNRYLMTQQRQQALALPQLLARAARESQDGRAVDLAGLRCAWEQLGLEVEYVEKVDAFNLQPLHAGRKLCLLAAAVRCGETRLIDHTFLMSRQPIVAIDGPAGAGKSTVTRAFAERLGLLYLDTGAMYRAVTWLTQQHDVDPHDPVAVKTILENLELELEPSQSGAQTVRINGHDVTEAIRSPEVTSSVSVVAAHGCVRKALTAQQQRMGVRGGLVAEGRDIGTAVFPDAELKVFLTASPAERARRRALDLDNRGFPVPDLAELETQIEERDRMDSTREVAPLRQAEDATELISDGMTIEEVIETLIDLFRVQVPEEVWPTAGR.

Residues 1–268 (MHQWRKHQQS…CGETRLIDHT (268 aa)) form a pantoate--beta-alanine ligase region. ATP is bound at residue 18–25 (MGALHRGH). The Proton donor role is filled by H25. (R)-pantoate is bound at residue Q53. A beta-alanine-binding site is contributed by Q53. 142–145 (GEKD) lines the ATP pocket. (R)-pantoate is bound at residue Q148. ATP is bound by residues V171 and 179–182 (CSSR). The cytidylate kinase stretch occupies residues 269–505 (FLMSRQPIVA…PEEVWPTAGR (237 aa)).

This sequence in the N-terminal section; belongs to the pantothenate synthetase family. The protein in the C-terminal section; belongs to the cytidylate kinase family. Type 1 subfamily.

Its subcellular location is the cytoplasm. The catalysed reaction is (R)-pantoate + beta-alanine + ATP = (R)-pantothenate + AMP + diphosphate + H(+). The enzyme catalyses CMP + ATP = CDP + ADP. It catalyses the reaction dCMP + ATP = dCDP + ADP. Its pathway is cofactor biosynthesis; (R)-pantothenate biosynthesis; (R)-pantothenate from (R)-pantoate and beta-alanine: step 1/1. In terms of biological role, catalyzes the condensation of pantoate with beta-alanine in an ATP-dependent reaction via a pantoyl-adenylate intermediate. Functionally, catalyzes the transfer of a phosphate group from ATP to either CMP or dCMP to form CDP or dCDP and ADP, respectively. This Prochlorococcus marinus (strain MIT 9313) protein is Bifunctional pantoate ligase/cytidylate kinase.